The sequence spans 313 residues: Dimethyladenosine transferase (313 aa).

The tract at residues 1 to 21 is disordered; that stretch reads MPKVKSGAIGRRRGRQEQRRE. His37, Leu39, Gly64, Glu85, Asp113, and Asn128 together coordinate S-adenosyl-L-methionine.

It belongs to the class I-like SAM-binding methyltransferase superfamily. rRNA adenine N(6)-methyltransferase family. Part of the small subunit (SSU) processome, composed of more than 70 proteins and the RNA chaperone small nucleolar RNA (snoRNA) U3.

Its subcellular location is the nucleus. It localises to the nucleoplasm. It is found in the nucleolus. The catalysed reaction is adenosine(1779)/adenosine(1780) in 18S rRNA + 4 S-adenosyl-L-methionine = N(6)-dimethyladenosine(1779)/N(6)-dimethyladenosine(1780) in 18S rRNA + 4 S-adenosyl-L-homocysteine + 4 H(+). Functionally, specifically dimethylates two adjacent adenosines in the loop of a conserved hairpin near the 3'-end of 18S rRNA in the 40S particle. Involved in the pre-rRNA processing steps leading to small-subunit rRNA production independently of its RNA-modifying catalytic activity. Part of the small subunit (SSU) processome, first precursor of the small eukaryotic ribosomal subunit. During the assembly of the SSU processome in the nucleolus, many ribosome biogenesis factors, an RNA chaperone and ribosomal proteins associate with the nascent pre-rRNA and work in concert to generate RNA folding, modifications, rearrangements and cleavage as well as targeted degradation of pre-ribosomal RNA by the RNA exosome. This Homo sapiens (Human) protein is Dimethyladenosine transferase.